The sequence spans 333 residues: Protoheme IX farnesyltransferase (333 aa).

7 consecutive transmembrane segments (helical) span residues 64–84 (LICT…LNCL), 110–130 (TVFL…ISGV), 133–153 (LAAG…TVIL), 161–181 (IVFG…AATG), 189–209 (WLFG…AILL), 246–266 (IMGV…LLPF), and 287–307 (AKSL…LLLI).

Belongs to the UbiA prenyltransferase family. Protoheme IX farnesyltransferase subfamily.

The protein localises to the cell inner membrane. It carries out the reaction heme b + (2E,6E)-farnesyl diphosphate + H2O = Fe(II)-heme o + diphosphate. It functions in the pathway porphyrin-containing compound metabolism; heme O biosynthesis; heme O from protoheme: step 1/1. In terms of biological role, converts heme B (protoheme IX) to heme O by substitution of the vinyl group on carbon 2 of heme B porphyrin ring with a hydroxyethyl farnesyl side group. This chain is Protoheme IX farnesyltransferase, found in Prochlorococcus marinus (strain MIT 9312).